The primary structure comprises 240 residues: uncharacterized protein (240 aa).

Residues 1–11 show a composition bias toward basic residues; it reads MGMTPRRKRRG. The interval 1 to 32 is disordered; that stretch reads MGMTPRRKRRGGAVQITRPTGRPRTPTTQTTK. Over residues 17–31 the composition is skewed to low complexity; the sequence is TRPTGRPRTPTTQTT. Transmembrane regions (helical) follow at residues 36 to 56, 93 to 113, 115 to 135, 146 to 166, 172 to 192, and 198 to 218; these read WVVG…VELI, LMAN…AGLS, FVWA…LIGN, IGAS…GLFV, IVIG…AMPV, and GVSW…AYLL.

This sequence to M.leprae ML1171.

It localises to the cell membrane. This is an uncharacterized protein from Mycobacterium tuberculosis (strain CDC 1551 / Oshkosh).